The primary structure comprises 260 residues: PHD finger protein ALFIN-LIKE 5 (260 aa).

Position 1 is an N-acetylmethionine (methionine 1). Positions 142–203 (AEKQTKEMPS…EEDEDEDEHG (62 aa)) are disordered. A compositionally biased stretch (polar residues) spans 148 to 165 (EMPSSANQNGNRSKSNSK). The segment covering 167–181 (RGLESKSSKTIHAKD) has biased composition (basic and acidic residues). Positions 182 to 202 (EEEGLELEEGEEEEDEDEDEH) are enriched in acidic residues. The segment at 204–256 (ETLCGACGDNYASDEFWICCDMCEKWFHGECVKITPARAEHIKHYKCPTCSNK) adopts a PHD-type zinc-finger fold.

It belongs to the Alfin family. As to quaternary structure, interacts with H3K4me3 and to a lesser extent with H3K4me2. In terms of tissue distribution, ubiquitously expressed.

Its subcellular location is the nucleus. Functionally, histone-binding component that specifically recognizes H3 tails trimethylated on 'Lys-4' (H3K4me3), which mark transcription start sites of virtually all active genes. The protein is PHD finger protein ALFIN-LIKE 5 (AL5) of Arabidopsis thaliana (Mouse-ear cress).